We begin with the raw amino-acid sequence, 911 residues long: MDYKDTLLLPKTTFPMRGNLPQNEPKKYKKWFSEHVYERMKQNRVGNDKFNLHDGPPYANGHIHIGHALNKILKDMIVKYYYFQGFDVRYTPGWDCHGLPIEQQVEKKIGREKKESLPKSKVRELCRQHAAKFIEIQKEEFQNLGVIGDWDNPYKTMDFEFEANIYKALAEIAKKGLLVERSKPVFWCMHDKTALAEAEVEYEDKEDYSIYVAFPLSNEAKSKLGIDNASIVIWTTTPWTLPANMGIALNPEEKYVLSEDGKIVAKELYENLKEAEVVSGEIVKEFDASELENLKAINPLNGRESVIILGEHVTMDGGTGCVHTAPGHGEEDYRVWLKYGFSEILQPVDDEGKYSNLIVTEKLLPEEFKGMHIFEANPKILDLLGDNLVKVSKFTHSYPHCWRCHNPVIFRATKQFFIAMDKEVNGDTLRHRALSEIEKVEFTPKTGKNRLSTMVANRPDWCISRQRDWGVPIAFFRNKDTGELIIDDEIIENVYEIFKVKGADAWYDLSIEELLPESKKEMASKLEKVNDILDVWFDSGSTWFAVLKNGPYDAGEYPANMYLEGSDQHRGWFQSSLLVSTSIEERAPYKSILTHGFTVDEKGEKMSKSKGNVVAPQEVSKKFGTEILRLWVATSDYSGDIKISDGILKQVAEQYRKIRNTIRFLLANVNDLEEIKLTNPSMIDRWILARSKEVFDEVVALFGKYDFSKAFNILNNFIVTELSAIYMDVCKDRLYCEPLNSEKRRNSQSTMAVIVKELISLLAPVLTYTMDEAVEHAPKVIKEDAKDVFDFVYTPLTAVENPIDEEILEIRRRFFEIVDRLKKEKVIKDTLELAIETNYDKLLVDEMADFFVVSLISDNIEGETLDEFHISDEQFVVKIKRSPLHKCPRCWRYLAEEEGALCERCEKAING.

A 'HIGH' region motif is present at residues 57–67 (PYANGHIHIGH). E564 contributes to the L-isoleucyl-5'-AMP binding site. Residues 605-609 (KMSKS) carry the 'KMSKS' region motif. K608 lines the ATP pocket. 4 residues coordinate Zn(2+): C887, C890, C902, and C905.

This sequence belongs to the class-I aminoacyl-tRNA synthetase family. IleS type 1 subfamily. Monomer. Zn(2+) is required as a cofactor.

Its subcellular location is the cytoplasm. The catalysed reaction is tRNA(Ile) + L-isoleucine + ATP = L-isoleucyl-tRNA(Ile) + AMP + diphosphate. Its function is as follows. Catalyzes the attachment of isoleucine to tRNA(Ile). As IleRS can inadvertently accommodate and process structurally similar amino acids such as valine, to avoid such errors it has two additional distinct tRNA(Ile)-dependent editing activities. One activity is designated as 'pretransfer' editing and involves the hydrolysis of activated Val-AMP. The other activity is designated 'posttransfer' editing and involves deacylation of mischarged Val-tRNA(Ile). The polypeptide is Isoleucine--tRNA ligase (Nautilia profundicola (strain ATCC BAA-1463 / DSM 18972 / AmH)).